We begin with the raw amino-acid sequence, 690 residues long: Proprotein convertase subtilisin/kexin type 9 (690 aa).

Positions M1–A28 are cleaved as a signal peptide. The propeptide occupies Q29–Q150. The residue at position 36 (Y36) is a Sulfotyrosine. S45 is subject to Phosphoserine. Residues T75 to V147 enclose the Inhibitor I9 domain. Positions P153–W459 constitute a Peptidase S8 domain. Residues D184 and H224 each act as charge relay system in the active site. Intrachain disulfides connect C221/C253 and C321/C356. The Charge relay system role is filled by S384. The interval G448–Q690 is C-terminal domain. Intrachain disulfides connect C455-C525, C475-C524, and C484-C507. N-linked (GlcNAc...) asparagine glycosylation occurs at N531. 6 cysteine pairs are disulfide-bonded: C532–C599, C550–C598, C560–C586, C606–C677, C624–C676, and C633–C652. A Phosphoserine modification is found at S686.

Belongs to the peptidase S8 family. As to quaternary structure, monomer. Can self-associate to form dimers and higher multimers which may have increased LDLR degrading activity. The precursor protein but not the mature protein may form multimers. Interacts with APOB, VLDLR, LRP8/APOER2 and BACE1. The full-length immature form (pro-PCSK9) interacts with SCNN1A, SCNN1B and SCNN1G. The pro-PCSK9 form (via C-terminal domain) interacts with LDLR. Interacts (via the C-terminal domain) with ANXA2 (via repeat Annexin 1); the interaction inhibits the degradation of LDLR. Requires Ca(2+) as cofactor. Cleavage by furin and PCSK5 generates a truncated inactive protein that is unable to induce LDLR degradation. In terms of processing, undergoes autocatalytic cleavage in the endoplasmic reticulum to release the propeptide from the N-terminus and the cleavage of the propeptide is strictly required for its maturation and activation. The cleaved propeptide however remains associated with the catalytic domain through non-covalent interactions, preventing potential substrates from accessing its active site. As a result, it is secreted from cells as a propeptide-containing, enzymatically inactive protein. Post-translationally, phosphorylation protects the propeptide against proteolysis.

The protein localises to the cytoplasm. It is found in the secreted. The protein resides in the endosome. It localises to the lysosome. Its subcellular location is the cell surface. The protein localises to the endoplasmic reticulum. It is found in the golgi apparatus. Its proteolytic activity is autoinhibited by the non-covalent binding of the propeptide to the catalytic domain. Inhibited by EGTA. In terms of biological role, crucial player in the regulation of plasma cholesterol homeostasis. Binds to low-density lipid receptor family members: low density lipoprotein receptor (LDLR), very low density lipoprotein receptor (VLDLR), apolipoprotein E receptor (LRP1/APOER) and apolipoprotein receptor 2 (LRP8/APOER2), and promotes their degradation in intracellular acidic compartments. Acts via a non-proteolytic mechanism to enhance the degradation of the hepatic LDLR through a clathrin LDLRAP1/ARH-mediated pathway. May prevent the recycling of LDLR from endosomes to the cell surface or direct it to lysosomes for degradation. Can induce ubiquitination of LDLR leading to its subsequent degradation. Inhibits intracellular degradation of APOB via the autophagosome/lysosome pathway in a LDLR-independent manner. Involved in the disposal of non-acetylated intermediates of BACE1 in the early secretory pathway. Inhibits epithelial Na(+) channel (ENaC)-mediated Na(+) absorption by reducing ENaC surface expression primarily by increasing its proteasomal degradation. Regulates neuronal apoptosis via modulation of LRP8/APOER2 levels and related anti-apoptotic signaling pathways. This Pongo pygmaeus (Bornean orangutan) protein is Proprotein convertase subtilisin/kexin type 9 (PCSK9).